A 1690-amino-acid polypeptide reads, in one-letter code: DNA-directed RNA polymerase subunit beta' (1690 aa).

4 residues coordinate Zn(2+): Cys-63, Cys-65, Cys-78, and Cys-81. Residues Asp-753, Asp-755, and Asp-757 each coordinate Mg(2+). 4 residues coordinate Zn(2+): Cys-1107, Cys-1295, Cys-1302, and Cys-1305.

It belongs to the RNA polymerase beta' chain family. In terms of assembly, the RNAP catalytic core consists of 2 alpha, 1 beta, 1 beta' and 1 omega subunit. When a sigma factor is associated with the core the holoenzyme is formed, which can initiate transcription. The cofactor is Mg(2+). Zn(2+) serves as cofactor.

The catalysed reaction is RNA(n) + a ribonucleoside 5'-triphosphate = RNA(n+1) + diphosphate. Functionally, DNA-dependent RNA polymerase catalyzes the transcription of DNA into RNA using the four ribonucleoside triphosphates as substrates. In Thermotoga petrophila (strain ATCC BAA-488 / DSM 13995 / JCM 10881 / RKU-1), this protein is DNA-directed RNA polymerase subunit beta'.